Consider the following 450-residue polypeptide: MKHNLPADLVTLWRDSPGYESARSRTFNQRIPPELPYAIVRPKNMEQIQHAVQLAVDLDKQIRIRSGGHSLAGWTLCADSILIDLVDFRHLEYDATTAIASASPSATSAQLNDLLVPHGRFVPVGHCGDVGLGGFFLQGGMGLNCRSYGWACEYLVGVDLITADGEYKHCSESENADLFWAARGAGPEFPAIVTRFFIRTRPAAAKYEKSTFIWPVACSDAVVSWILKILPELHADIEPLVVSTIVPGLNVAAILVQFLVFLSTNETGAEKLGPSLTAMPDGTLMEFKGVPTSIQQEYVSQEGTMPRDSRYICDSVWFKDGIDFVTVTRRMFREFPRDRSMVYWEPKYPTSRRQLPDMAFSLQADQYLALFAIFEDSQQDEEQGIRIQEFIQEIEPYVLGTFAADGMPAVRKTQYWSAEVIERLYSVCQKWDPAHRLGCTLLDPTRKVKS.

The region spanning 32-203 (PPELPYAIVR…TRFFIRTRPA (172 aa)) is the FAD-binding PCMH-type domain.

It belongs to the oxygen-dependent FAD-linked oxidoreductase family. FAD is required as a cofactor.

Its pathway is secondary metabolite biosynthesis. In terms of biological role, FAD-linked oxidoreductase; part of the gene cluster that mediates the biosynthesis of the indole diterpenes penitrems. The geranylgeranyl diphosphate (GGPP) synthase ptmG catalyzes the first step in penitrem biosynthesis via conversion of farnesyl pyrophosphate and isopentyl pyrophosphate into geranylgeranyl pyrophosphate (GGPP). Condensation of indole-3-glycerol phosphate with GGPP by the prenyl transferase ptmC then forms 3-geranylgeranylindole (3-GGI). Epoxidation by the FAD-dependent monooxygenase ptmM leads to a epoxidized-GGI that is substrate of the terpene cyclase ptmB for cyclization to yield paspaline. Paspaline is subsequently converted to 13-desoxypaxilline by the cytochrome P450 monooxygenase ptmP, the latter being then converted to paxilline by the cytochrome P450 monooxygenase ptmQ. Paxilline is converted to beta-paxitriol via C-10 ketoreduction by the short-chain dehydrogenase ptmH which can be monoprenylated at the C-20 by the indole diterpene prenyltransferase ptmD. A two-step elimination (acetylation and elimination) process performed by the O-acetyltransferase ptmV and ptmI leads to the production of the prenylated form of penijanthine. The FAD-linked oxidoreductase ptmO then converts the prenylated form of penijanthine into PC-M5 which is in turn transformed into PC-M4 by the aromatic dimethylallyltransferase ptmE. Five sequential oxidative transformations performed by the cytochrome P450 monooxygenases ptmK, ptmU, ptmL, ptmN and ptmJ yield the various penitrem compounds. PtmK, ptmU and ptmM are involved in the formation of the key bicyclic ring of penitrem C via the formation of the intermediates secopenitrem D and penitrem D. PtmL catalyzes the epoxidation of penitrem D and C to yield penitrem B and F, respectively. PtmJ catalyzes the last benzylic hydroxylation to convert penitrem B to prenitrem E and penitrem F to penitrem A. The chain is FAD-linked oxidoreductase ptmO from Penicillium ochrochloron.